Here is a 73-residue protein sequence, read N- to C-terminus: Ocellatin-PT8 (73 aa).

Residues 1 to 22 (MAFLKKSLFLVLFLGLVSLSIC) form the signal peptide. Positions 23–39 (DEEKRQDEDDDDDDDEE) are excised as a propeptide.

As to expression, expressed by the skin glands.

Its subcellular location is the secreted. Has antibacterial activity against Gram-negative bacteria E.coli ATCC 25922 (MIC=60 uM), K.pneumoniae ATCC 700603 (MIC=240 uM) and S.choleraesuis ATCC 14028 (MIC=240 uM) and against Gram-positive bacterium S.aureus ATCC 29313 (MIC=240 uM). Shows no hemolytic activity and no cytotoxicity. The sequence is that of Ocellatin-PT8 from Leptodactylus pustulatus (Ceara white-lipped frog).